A 550-amino-acid chain; its full sequence is Dihydroxy-acid dehydratase (550 aa).

Residue Asp-78 coordinates Mg(2+). Position 119 (Cys-119) interacts with [2Fe-2S] cluster. The Mg(2+) site is built by Asp-120 and Lys-121. Lys-121 is subject to N6-carboxylysine. Cys-191 lines the [2Fe-2S] cluster pocket. Glu-440 serves as a coordination point for Mg(2+). Ser-466 serves as the catalytic Proton acceptor.

This sequence belongs to the IlvD/Edd family. Homodimer. [2Fe-2S] cluster is required as a cofactor. The cofactor is Mg(2+).

The enzyme catalyses (2R)-2,3-dihydroxy-3-methylbutanoate = 3-methyl-2-oxobutanoate + H2O. It carries out the reaction (2R,3R)-2,3-dihydroxy-3-methylpentanoate = (S)-3-methyl-2-oxopentanoate + H2O. It functions in the pathway amino-acid biosynthesis; L-isoleucine biosynthesis; L-isoleucine from 2-oxobutanoate: step 3/4. The protein operates within amino-acid biosynthesis; L-valine biosynthesis; L-valine from pyruvate: step 3/4. Functions in the biosynthesis of branched-chain amino acids. Catalyzes the dehydration of (2R,3R)-2,3-dihydroxy-3-methylpentanoate (2,3-dihydroxy-3-methylvalerate) into 2-oxo-3-methylpentanoate (2-oxo-3-methylvalerate) and of (2R)-2,3-dihydroxy-3-methylbutanoate (2,3-dihydroxyisovalerate) into 2-oxo-3-methylbutanoate (2-oxoisovalerate), the penultimate precursor to L-isoleucine and L-valine, respectively. In Methanococcus maripaludis (strain C5 / ATCC BAA-1333), this protein is Dihydroxy-acid dehydratase.